Consider the following 168-residue polypeptide: Urease accessory protein UreE (168 aa).

The interval 137–168 (PESGAYHGTTGHGGGHSHSHGHSHDHHHDHSH) is disordered. The span at 151–161 (GHSHSHGHSHD) shows a compositional bias: basic residues.

The protein belongs to the UreE family.

It localises to the cytoplasm. Its function is as follows. Involved in urease metallocenter assembly. Binds nickel. Probably functions as a nickel donor during metallocenter assembly. This Saccharophagus degradans (strain 2-40 / ATCC 43961 / DSM 17024) protein is Urease accessory protein UreE.